A 682-amino-acid polypeptide reads, in one-letter code: Acyl-CoA synthetase short-chain family member 3, mitochondrial (682 aa).

A mitochondrion-targeting transit peptide spans 1 to 29; that stretch reads MKPSWLQCRKVTGAGTLGAPLPGSPSVRG. 222–225 serves as a coordination point for CoA; the sequence is EPGR. ATP is bound by residues 420-422 and 441-446; these read GER and DHWWQT. Lysine 513 carries the N6-succinyllysine modification. Position 519 is an N6-acetyllysine (lysine 519). ATP contacts are provided by aspartate 534, arginine 549, and arginine 560. CoA is bound at residue arginine 619.

This sequence belongs to the ATP-dependent AMP-binding enzyme family.

It localises to the mitochondrion matrix. It carries out the reaction acetate + ATP + CoA = acetyl-CoA + AMP + diphosphate. The catalysed reaction is propanoate + ATP + CoA = propanoyl-CoA + AMP + diphosphate. The enzyme catalyses butanoate + ATP + CoA = butanoyl-CoA + AMP + diphosphate. Catalyzes the synthesis of acetyl-CoA from short-chain fatty acids. Propionate is the preferred substrate but can also utilize acetate and butyrate with a much lower affinity. In Mus musculus (Mouse), this protein is Acyl-CoA synthetase short-chain family member 3, mitochondrial (Acss3).